A 324-amino-acid polypeptide reads, in one-letter code: Short-chain dehydrogenase/reductase iacJ (324 aa).

Residues Ile-42, Lys-66, Asp-93, Asn-120, Tyr-204, Lys-208, and Thr-239 each contribute to the NADP(+) site. Tyr-204 acts as the Proton donor in catalysis. Residue Lys-208 is the Lowers pKa of active site Tyr of the active site.

Belongs to the short-chain dehydrogenases/reductases (SDR) family.

It functions in the pathway secondary metabolite biosynthesis. In terms of biological role, short-chain dehydrogenase/reductase; part of the gene cluster that mediates the biosynthesis of iso-A82775C, a enylepoxycyclohexane and biosynthetic precursor of the chloropestolide anticancer natural products. Within the cluster, the prenyltransferase iacE prenylates siccayne to generate pestalodiol E, using dimethylallyl diphosphate (DMAPP) as cosubstrate. The probable oxidoreductase iacF is then involved in the epoxidation of pestalodiol F to pestalodiol F, which is further converted to pestalofone A by the short-chain dehydrogenase/reductase iacG. Iso-A82775C is subsequently generated from pestalofone A by the short-chain dehydrogenase/reductase iacC. Iso-A82775C is further condensed with maldoxin via a Diels-Alder reaction to produce the anticancer natural products chloropestolides A to E. The chain is Short-chain dehydrogenase/reductase iacJ from Pestalotiopsis fici (strain W106-1 / CGMCC3.15140).